The following is a 96-amino-acid chain: Non-specific lipid-transfer protein 2 (96 aa).

The first 27 residues, Met1 to Gly27, serve as a signal peptide directing secretion. Disulfide bonds link Cys30/Cys62, Cys38/Cys52, Cys53/Cys88, and Cys64/Cys95.

In terms of biological role, transfer lipids across membranes. May play a role in plant defense or in the biosynthesis of cuticle layers. The sequence is that of Non-specific lipid-transfer protein 2 (LTP-2) from Oryza sativa subsp. japonica (Rice).